Reading from the N-terminus, the 367-residue chain is Aminomethyltransferase (367 aa).

This sequence belongs to the GcvT family. In terms of assembly, the glycine cleavage system is composed of four proteins: P, T, L and H.

It catalyses the reaction N(6)-[(R)-S(8)-aminomethyldihydrolipoyl]-L-lysyl-[protein] + (6S)-5,6,7,8-tetrahydrofolate = N(6)-[(R)-dihydrolipoyl]-L-lysyl-[protein] + (6R)-5,10-methylene-5,6,7,8-tetrahydrofolate + NH4(+). The glycine cleavage system catalyzes the degradation of glycine. This is Aminomethyltransferase from Saccharopolyspora erythraea (strain ATCC 11635 / DSM 40517 / JCM 4748 / NBRC 13426 / NCIMB 8594 / NRRL 2338).